A 637-amino-acid chain; its full sequence is Poly(U)-binding-splicing factor hfp (637 aa).

Basic and acidic residues-rich tracts occupy residues 1 to 20 and 28 to 37; these read MGSN…REIS and TRSDSGKSTD. Positions 1 to 41 are disordered; that stretch reads MGSNDRASRSPRSDDQREISDMPATKRTRSDSGKSTDSKIP. Phosphoserine occurs at positions 13 and 30. 2 consecutive RRM domains span residues 130–208 and 227–305; these read CRVY…RPSN and NRIY…RSIT. The region spanning 537–627 is the RRM 3; atypical domain; sequence RVIILRNMVG…RRVVAELYDQ (91 aa).

This sequence belongs to the RRM half pint family. Interacts with enc. However, given the cytoplasmic localization of enc, the relevance of such interaction is unclear. In terms of tissue distribution, expressed in all germline cells and within the follicle cell.

The protein resides in the nucleus. Splicing factor that regulates oogenesis and controls both mitosis and mRNA localization in the germline by regulating mRNA splicing of a subset of genes within the ovary. Probably acts by regulating the alternative splice site selection of the otu transcript. Also regulates the alternative splicing of eIF4E1 and grk, while it is not involved in the splicing of par-1, sqd or psq. Involved in the alternative splicing of the bicistronic pre-mRNA encoding Kdm3 and CG8176; required for the efficient production of mRNA encoding Kdm3 and Kdm3-mediated regulation of rhino-dependent piRNA production. This chain is Poly(U)-binding-splicing factor hfp, found in Drosophila melanogaster (Fruit fly).